The primary structure comprises 111 residues: MANVYDLANELERAVRALPEYQAVLTAKAAIENDADAQVLWQDFLAAQSKVQEMMQSGQMPSQEEQDEMSKLGEKIESNDLLKVYFDHQQRLSVYMSDIEKIVFAPMQDLM.

This sequence belongs to the UPF0342 family.

This Streptococcus agalactiae serotype III (strain NEM316) protein is UPF0342 protein gbs1446.